The primary structure comprises 124 residues: Phosphoribosyl-ATP pyrophosphatase (124 aa).

This sequence belongs to the PRA-PH family.

It localises to the cytoplasm. The enzyme catalyses 1-(5-phospho-beta-D-ribosyl)-ATP + H2O = 1-(5-phospho-beta-D-ribosyl)-5'-AMP + diphosphate + H(+). Its pathway is amino-acid biosynthesis; L-histidine biosynthesis; L-histidine from 5-phospho-alpha-D-ribose 1-diphosphate: step 2/9. This Ralstonia nicotianae (strain ATCC BAA-1114 / GMI1000) (Ralstonia solanacearum) protein is Phosphoribosyl-ATP pyrophosphatase (hisE).